Reading from the N-terminus, the 139-residue chain is Arsenate reductase (139 aa).

Active-site nucleophile residues include Cys10, Cys82, and Cys89. Cystine bridges form between Cys10/Cys82 and Cys82/Cys89.

This sequence belongs to the low molecular weight phosphotyrosine protein phosphatase family. Thioredoxin-coupled ArsC subfamily.

It is found in the cytoplasm. It carries out the reaction arsenate + [thioredoxin]-dithiol + H(+) = arsenite + [thioredoxin]-disulfide + H2O. Functionally, catalyzes the reduction of arsenate [As(V)] to arsenite [As(III)]. In Halalkalibacterium halodurans (strain ATCC BAA-125 / DSM 18197 / FERM 7344 / JCM 9153 / C-125) (Bacillus halodurans), this protein is Arsenate reductase.